We begin with the raw amino-acid sequence, 1453 residues long: Collagen alpha-1(I) chain (1453 aa).

An N-terminal signal peptide occupies residues Met1 to Gly22. The propeptide at Glu23 to Pro151 is N-terminal propeptide. A VWFC domain is found at Gly31–Pro89. The interval Pro98 to Arg1203 is disordered. The segment covering Pro106–Arg116 has biased composition (basic and acidic residues). Residues Pro131–Pro143 show a composition bias toward pro residues. Pyrrolidone carboxylic acid is present on Gln152. Position 160 is an allysine (Lys160). Over residues Ala162–Arg176 the composition is skewed to low complexity. 4-hydroxyproline occurs at positions 179, 182, 185, 194, 197, 200, 215, 230, 236, 245, and 251. A compositionally biased stretch (low complexity) spans Pro187–Met206. Residue Lys254 is modified to 5-hydroxylysine; alternate. The O-linked (Gal...) hydroxylysine; partial glycan is linked to Lys254. Low complexity predominate over residues Ala265 to Asn284. A 4-hydroxyproline mark is found at Pro269, Pro278, Pro281, Pro287, Pro296, Pro302, Pro317, Pro323, Pro332, and Pro335. Residues Pro307–Ala319 are compositionally biased toward low complexity. Pro residues predominate over residues Ala320–Phe334. Residues Arg350–Glu361 show a composition bias toward low complexity. 4-hydroxyproline occurs at positions 362, 365, 377, 383, 392, 398, 401, and 416. Residues Ala368–Pro418 are compositionally biased toward low complexity. A 5-hydroxylysine modification is found at Lys419. 4-hydroxyproline occurs at positions 425, 428, 440, 449, 464, 470, 479, and 485. Residues Glu463–Arg482 show a composition bias toward low complexity. Lys494 carries the post-translational modification 5-hydroxylysine. 4-hydroxyproline is present on residues Pro497, Pro503, Pro512, Pro518, Pro524, Pro533, Pro536, Pro545, Pro554, Pro560, Pro572, Pro581, Pro584, Pro590, Pro593, Pro611, Pro629, Pro635, Pro641, Pro647, Pro653, Pro659, Pro671, Pro680, Pro692, Pro704, Pro707, Pro713, Pro719, Pro728, and Pro737. Low complexity predominate over residues Lys527–Pro581. Positions Gln623 to Ala664 are enriched in low complexity. Low complexity predominate over residues Pro685 to Arg722. Lys740 carries the 5-hydroxylysine modification. Pro746, Pro761, Pro767, Pro776, Pro788, Pro794, Pro797, Pro806, Pro812, Pro830, Pro839, and Pro848 each carry 4-hydroxyproline. The span at Ala800–Ala827 shows a compositional bias: low complexity. Positions Pro835–Leu883 are enriched in low complexity. 5-hydroxylysine is present on Lys851. 4-hydroxyproline is present on residues Pro860 and Pro866. The residue at position 874 (Pro874) is a 3-hydroxyproline. Residues Pro875, Pro884, Pro887, Pro908, Pro911, Pro917, Pro920, Pro926, Pro935, Pro953, Pro962, Pro965, Pro971, Pro986, Pro992, Pro998, Pro1007, and Pro1013 each carry the 4-hydroxyproline modification. Low complexity predominate over residues Ala890–Pro908. A compositionally biased stretch (pro residues) spans Glu910–Pro920. The span at Pro985–Ala995 shows a compositional bias: pro residues. A compositionally biased stretch (low complexity) spans Pro997–Pro1021. Position 1022 is a 5-hydroxylysine; partial (Lys1022). Residues Ala1031–Val1046 show a composition bias toward pro residues. Residues Pro1034, Pro1037, Pro1040, and Pro1067 each carry the 4-hydroxyproline modification. Residues Ala1070–Pro1081 are compositionally biased toward low complexity. The segment covering Arg1082–Met1096 has biased composition (basic and acidic residues). Lys1085 bears the 5-hydroxylysine; partial mark. Position 1097 is a 5-hydroxylysine; alternate (Lys1097). A glycan (O-linked (Gal...) hydroxylysine; partial) is linked at Lys1097. 5 positions are modified to 4-hydroxyproline: Pro1109, Pro1112, Pro1115, Pro1133, and Pro1148. The segment covering Pro1115–Ala1139 has biased composition (low complexity). Pro1153 carries the 3-hydroxyproline modification. The residue at position 1154 (Pro1154) is a 4-hydroxyproline. The segment covering Val1166–Pro1181 has biased composition (pro residues). Pro1168 is modified (3-hydroxyproline). Pro1169 is subject to 4-hydroxyproline. A 3-hydroxyproline modification is found at Pro1171. Pro1172 is subject to 4-hydroxyproline. Residue Pro1174 is modified to 3-hydroxyproline. 4-hydroxyproline is present on residues Pro1175, Pro1178, and Pro1181. An Allysine modification is found at Lys1197. Residues Asp1208–Leu1453 constitute a propeptide, C-terminal propeptide. Positions Leu1218–Leu1453 constitute a Fibrillar collagen NC1 domain. 3 cysteine pairs are disulfide-bonded: Cys1248/Cys1280, Cys1288/Cys1451, and Cys1359/Cys1404. Ca(2+)-binding residues include Asp1266, Asn1268, Gln1269, Cys1271, and Asp1274. Asn1354 carries an N-linked (GlcNAc...) asparagine glycan.

It belongs to the fibrillar collagen family. As to quaternary structure, trimers of one alpha 2(I) and two alpha 1(I) chains. In terms of processing, contains mostly 4-hydroxyproline. Proline residues at the third position of the tripeptide repeating unit (G-X-Y) are 4-hydroxylated in some or all of the chains. Contains 3-hydroxyproline. This modification occurs on the first proline residue in the sequence motif Gly-Pro-Hyp, where Hyp is 4-hydroxyproline. Post-translationally, lysine residues at the third position of the tripeptide repeating unit (G-X-Y) are 5-hydroxylated in some or all of the chains. In terms of processing, O-glycosylated on hydroxylated lysine residues. The O-linked glycan consists of a Glc-Gal disaccharide. As to expression, forms the fibrils of tendon, ligaments and bones. In bones the fibrils are mineralized with calcium hydroxyapatite.

It is found in the secreted. It localises to the extracellular space. The protein localises to the extracellular matrix. Type I collagen is a member of group I collagen (fibrillar forming collagen). The polypeptide is Collagen alpha-1(I) chain (COL1A1) (Gallus gallus (Chicken)).